Here is a 930-residue protein sequence, read N- to C-terminus: Bifunctional uridylyltransferase/uridylyl-removing enzyme (930 aa).

The segment at 1–387 is uridylyltransferase; that stretch reads MAPASEAGPA…IMGLFRRKKR (387 aa). Residues 388-741 are uridylyl-removing; it reads LKPEYSLVNG…LDPDPDRDAT (354 aa). Residues 504–626 form the HD domain; it reads VDEHTIQCIS…VRSKKRLDLL (123 aa). ACT domains follow at residues 742–818 and 852–927; these read RACF…VVAR and IIEV…GAER.

Belongs to the GlnD family. Mg(2+) serves as cofactor.

It carries out the reaction [protein-PII]-L-tyrosine + UTP = [protein-PII]-uridylyl-L-tyrosine + diphosphate. It catalyses the reaction [protein-PII]-uridylyl-L-tyrosine + H2O = [protein-PII]-L-tyrosine + UMP + H(+). Its activity is regulated as follows. Uridylyltransferase (UTase) activity is inhibited by glutamine, while glutamine activates uridylyl-removing (UR) activity. Functionally, modifies, by uridylylation and deuridylylation, the PII regulatory proteins (GlnB and homologs), in response to the nitrogen status of the cell that GlnD senses through the glutamine level. Under low glutamine levels, catalyzes the conversion of the PII proteins and UTP to PII-UMP and PPi, while under higher glutamine levels, GlnD hydrolyzes PII-UMP to PII and UMP (deuridylylation). Thus, controls uridylylation state and activity of the PII proteins, and plays an important role in the regulation of nitrogen fixation and metabolism. The protein is Bifunctional uridylyltransferase/uridylyl-removing enzyme of Cereibacter sphaeroides (strain ATCC 17023 / DSM 158 / JCM 6121 / CCUG 31486 / LMG 2827 / NBRC 12203 / NCIMB 8253 / ATH 2.4.1.) (Rhodobacter sphaeroides).